The following is an 80-amino-acid chain: Putative antitoxin VapB44 (80 aa).

Positions 40 to 68 (NQNPQPAASQEDAFHGFEPLPHRGGAVSN) are disordered.

In terms of biological role, possibly the antitoxin component of a type II toxin-antitoxin (TA) system. Its cognate toxin is VapC44 (Potential). This Mycobacterium tuberculosis (strain CDC 1551 / Oshkosh) protein is Putative antitoxin VapB44 (vapB44).